A 453-amino-acid polypeptide reads, in one-letter code: MTQQRQMHLAGFFSAGNVTHAHGAWRHTDASNDFLSGKYYQHIARTLERGKFDLLFLPDGLAVEDSYGDNLDTGVGLGGQGAVALEPASVVATMAAVTEHLGLGATISATYYPPYHVARVFATLDQLSGGRVSWNVVTSLNDAEARNFGINQHLEHDARYDRADEFLEAVKKLWNSWDEDALVLDKAAGVFADPAKVHYVDHHGEWLNVRGPLQVPRSPQGEPVILQAGLSPRGRRFAGKWAEAVFSLAPNLEVMQATYQGIKAEVDAAGRDPDQTKIFTAVMPVLGESQAVAQERLEYLNSLVHPEVGLSTLSSHTGINLAAYPLDTPIKDILRDLQDRNVPTQLHMFAAATHSEELTLAEMGRRYGTNVGFVPQWAGTGEQIADELIRHFEGGAADGFIISPAFLPGSYDEFVDQVVPVLQDRGYFRTEYQGNTLRDHLGLRVPQLQGQPS.

FMN contacts are provided by D59, T106, H156, Y160, and S231.

This sequence belongs to the NtaA/SnaA/DszA monooxygenase family. Homodimer.

Its subcellular location is the cytoplasm. It catalyses the reaction dibenzothiophene 5,5-dioxide + FMNH2 + NADH + O2 = 2'-hydroxybiphenyl-2-sulfinate + FMN + NAD(+) + H2O + H(+). It participates in sulfur metabolism; dibenzothiophene degradation. In terms of biological role, catalyzes the second step of the '4S' desulfurization pathway that removes covalently bound sulfur from dibenzothiophene (DBT) without breaking carbon-carbon bonds. Metabolizes DBT-sulfone (DBTO2 or DBT 5,5-dioxide) to 2-(2'-hydroxyphenyl)benzene sulphinate (HBPS). The sequence is that of Dibenzothiophene-sulfone monooxygenase from Rhodococcus erythropolis (strain XP).